The sequence spans 61 residues: UPF0391 membrane protein Aave_0978 (61 aa).

A run of 2 helical transmembrane segments spans residues 5–25 (AIIF…GVAA) and 33–53 (ILFF…VLGV).

Belongs to the UPF0391 family.

Its subcellular location is the cell membrane. The chain is UPF0391 membrane protein Aave_0978 from Paracidovorax citrulli (strain AAC00-1) (Acidovorax citrulli).